The primary structure comprises 375 residues: Aminomethyltransferase (375 aa).

Belongs to the GcvT family. The glycine cleavage system is composed of four proteins: P, T, L and H.

The catalysed reaction is N(6)-[(R)-S(8)-aminomethyldihydrolipoyl]-L-lysyl-[protein] + (6S)-5,6,7,8-tetrahydrofolate = N(6)-[(R)-dihydrolipoyl]-L-lysyl-[protein] + (6R)-5,10-methylene-5,6,7,8-tetrahydrofolate + NH4(+). In terms of biological role, the glycine cleavage system catalyzes the degradation of glycine. This chain is Aminomethyltransferase, found in Cupriavidus taiwanensis (strain DSM 17343 / BCRC 17206 / CCUG 44338 / CIP 107171 / LMG 19424 / R1) (Ralstonia taiwanensis (strain LMG 19424)).